The following is a 136-amino-acid chain: Large ribosomal subunit protein bL17 (136 aa).

It belongs to the bacterial ribosomal protein bL17 family. As to quaternary structure, part of the 50S ribosomal subunit. Contacts protein L32.

The protein is Large ribosomal subunit protein bL17 of Rhodopseudomonas palustris (strain BisB5).